The chain runs to 226 residues: 3-dehydroquinate dehydratase (226 aa).

Residues Ser-9, 32-34 (EVR), and Arg-59 each bind 3-dehydroquinate. The Proton donor/acceptor role is filled by His-119. Lys-146 functions as the Schiff-base intermediate with substrate in the catalytic mechanism. Residues Arg-187, Thr-208, and Gln-212 each contribute to the 3-dehydroquinate site.

It belongs to the type-I 3-dehydroquinase family. Homodimer.

It carries out the reaction 3-dehydroquinate = 3-dehydroshikimate + H2O. It functions in the pathway metabolic intermediate biosynthesis; chorismate biosynthesis; chorismate from D-erythrose 4-phosphate and phosphoenolpyruvate: step 3/7. Involved in the third step of the chorismate pathway, which leads to the biosynthesis of aromatic amino acids. Catalyzes the cis-dehydration of 3-dehydroquinate (DHQ) and introduces the first double bond of the aromatic ring to yield 3-dehydroshikimate. The chain is 3-dehydroquinate dehydratase from Desulfotalea psychrophila (strain LSv54 / DSM 12343).